Reading from the N-terminus, the 526-residue chain is Na(+)/H(+) antiporter NhaB (526 aa).

11 helical membrane-spanning segments follow: residues 14–34, 63–83, 99–119, 122–142, 146–166, 206–226, 239–259, 307–327, 357–377, 451–471, and 479–499; these read FLGYAPDWYKLTIFCFLLVNP, CYPLQPGGLLALQAMLIGMTS, MLLVFMVAGIYFMKQLLLFVF, LLLRIHSKALLSLAFCGAAAF, FLDALTVIAVVISVAIGFYGI, LLMHAGVGTALGGVMTMVGEP, FVSFFLHMSPVTVPVFICGIL, AVIGVWLIVALAFHLAEVGLI, FTALLTVFFAIVAVIIDQQLF, ATPNGQAAFLFLLTSSLAPLI, and VIMALPYTIVMTLVGLLCVEF.

The protein belongs to the NhaB Na(+)/H(+) (TC 2.A.34) antiporter family.

It localises to the cell inner membrane. It catalyses the reaction 2 Na(+)(in) + 3 H(+)(out) = 2 Na(+)(out) + 3 H(+)(in). Its function is as follows. Na(+)/H(+) antiporter that extrudes sodium in exchange for external protons. The sequence is that of Na(+)/H(+) antiporter NhaB from Pectobacterium carotovorum subsp. carotovorum (strain PC1).